The following is a 125-amino-acid chain: MPTIQQLIHSAREKITNKTKSPALKACPQRRGVCTRVYTTTPKKPNSALRKVARIRLTTGFEVTAYIPGVGHTLQEHSVVLVRGGRVKDLPGVRYHIVRGTLDTAGVKGRLKSRSKYGVKKPKKK.

It belongs to the universal ribosomal protein uS12 family. Part of the 30S ribosomal subunit.

Its subcellular location is the plastid. The protein localises to the chloroplast. Its function is as follows. With S4 and S5 plays an important role in translational accuracy. Located at the interface of the 30S and 50S subunits. In Tupiella akineta (Green alga), this protein is Small ribosomal subunit protein uS12c (rps12).